The primary structure comprises 614 residues: Fem-3 mRNA-binding factor 1 (614 aa).

Residues 1 to 24 (MDQSKMRYTNQFRKTPQKPTSTEV) show a composition bias toward polar residues. The interval 1 to 34 (MDQSKMRYTNQFRKTPQKPTSTEVGNHHTPAHSP) is disordered. The region spanning 160 to 564 (TRSNNVLPTW…KMIETLAHLR (405 aa)) is the PUM-HD domain. Pumilio repeat units follow at residues 185 to 223 (EVLD…QLFE), 224 to 263 (QVIG…NIKR), 269 to 305 (NFIS…KLVQ), 306 to 342 (ALPR…EFIV), 343 to 382 (DFVA…DLTS), 398 to 434 (SVTN…CIIE), 436 to 471 (CLMR…EMMD), and 483 to 519 (TGKD…RQTK). A binding to gld-3 isoform A region spans residues 283-614 (FACRVIQSSL…NLRLMRTFSP (332 aa)).

Interacts (via C-terminus) with gld-3 isoform A in an RNA-independent manner. Expressed specifically in the germline (at protein level).

It is found in the cytoplasm. Its function is as follows. RNA-binding protein that binds to the consensus sequence 5'-UGUGCCAUA-3' in mRNA 3'-UTRs. Involved in the control of stem cells and sex determination in the C.elegans hermaphrodite germline. May also play a role in the hermaphrodite germline proliferation and oogenesis. Binds specifically to the regulatory region of fem-3 3'-UTR and mediates the sperm/oocyte switch. Negatively regulates gld-3 expression, possibly by directly binding to two sites within the 3'-UTR of gld-3 isoform b. In association with the cye-1/cdk-2 complex, negatively regulates gld-1 expression in the distal germline cells of the mitotic zone. By binding to the 3'-UTR, represses phosphatase lip-1 expression in the distal part of the germline mitotic zone. Suppresses germline tumor formation by preventing the dedifferentiation of secondary spermatocytes. This is Fem-3 mRNA-binding factor 1 (fbf-1) from Caenorhabditis elegans.